Reading from the N-terminus, the 897-residue chain is Leucine--tRNA ligase (897 aa).

The 'HIGH' region motif lies at 49-59 (PYPSGKLHMGH). The 'KMSKS' region motif lies at 654 to 658 (KMSKS). An ATP-binding site is contributed by Lys657.

The protein belongs to the class-I aminoacyl-tRNA synthetase family.

Its subcellular location is the cytoplasm. The enzyme catalyses tRNA(Leu) + L-leucine + ATP = L-leucyl-tRNA(Leu) + AMP + diphosphate. This Methylibium petroleiphilum (strain ATCC BAA-1232 / LMG 22953 / PM1) protein is Leucine--tRNA ligase.